We begin with the raw amino-acid sequence, 92 residues long: C-C motif chemokine 3 (92 aa).

An N-terminal signal peptide occupies residues 1–23 (MQVSTAALAVLLCTMALCNQFSA). Disulfide bonds link Cys33-Cys57 and Cys34-Cys73.

The protein belongs to the intercrine beta (chemokine CC) family. Self-associates. Also heterodimer of MIP-1-alpha(4-69) and MIP-1-beta(3-69). Interacts with CCR1.

The protein localises to the secreted. Its function is as follows. Monokine with inflammatory and chemokinetic properties. Binds to CCR1, CCR4 and CCR5. One of the major HIV-suppressive factors produced by CD8+ T-cells. Recombinant MIP-1-alpha induces a dose-dependent inhibition of different strains of HIV-1, HIV-2, and simian immunodeficiency virus (SIV). This chain is C-C motif chemokine 3 (CCL3), found in Pan troglodytes (Chimpanzee).